A 576-amino-acid polypeptide reads, in one-letter code: Calcium-dependent protein kinase 11 (576 aa).

The N-myristoyl glycine moiety is linked to residue Gly2. The segment at 27 to 88 (PADAAPPALP…ANKAAPKVKR (62 aa)) is disordered. Low complexity predominate over residues 41 to 56 (APSDQAPEPVTIPPSE). Residues 113 to 371 (YTIGKKLGQG…AHEALCHPWV (259 aa)) enclose the Protein kinase domain. ATP contacts are provided by residues 119 to 127 (LGQGQFGTT) and Lys142. Asp237 acts as the Proton acceptor in catalysis. Positions 377–407 (APDKPLDSAVLSRLKQFSAMNKLKKMALRVI) are autoinhibitory domain. EF-hand domains are found at residues 414 to 449 (EEIA…VGAN), 450 to 485 (LMDS…INKV), 486 to 521 (EKED…FGIG), and 522 to 555 (DTRI…GNNA). Asp427, Asp429, Ser431, His433, Glu438, Asp463, Asp465, Ser467, Thr469, Glu474, Asp499, Asp501, Ser503, Tyr505, Glu510, Asp533, Asp535, Asp537, Arg539, and Glu544 together coordinate Ca(2+).

The protein belongs to the protein kinase superfamily. Ser/Thr protein kinase family. CDPK subfamily.

Its subcellular location is the membrane. The enzyme catalyses L-seryl-[protein] + ATP = O-phospho-L-seryl-[protein] + ADP + H(+). It catalyses the reaction L-threonyl-[protein] + ATP = O-phospho-L-threonyl-[protein] + ADP + H(+). Its activity is regulated as follows. Activated by calcium. Autophosphorylation may play an important role in the regulation of the kinase activity. In terms of biological role, may play a role in signal transduction pathways that involve calcium as a second messenger. The protein is Calcium-dependent protein kinase 11 of Oryza sativa subsp. japonica (Rice).